A 305-amino-acid chain; its full sequence is NADH-ubiquinone oxidoreductase chain 1 (305 aa).

8 helical membrane-spanning segments follow: residues 1 to 21 (MWVLINLLILMIMVLISVAFL), 75 to 95 (MLMFFLSLVMWILYPWFGFMY), 101 to 121 (ILFMLLVLGLSVYPVLFVGWI), 134 to 154 (LVSTMISFEINLFFLVFSLMM), 173 to 193 (FAILLYPLYLMMFTSMLIELN), 219 to 239 (FVLIFLSEYMNIMFMSVILSL), 249 to 269 (IKFILIYLFHICLIIWIRGIL), and 285 to 305 (MLMLVMIYLMYLYFMKEFLCI).

Belongs to the complex I subunit 1 family.

Its subcellular location is the mitochondrion inner membrane. The catalysed reaction is a ubiquinone + NADH + 5 H(+)(in) = a ubiquinol + NAD(+) + 4 H(+)(out). Core subunit of the mitochondrial membrane respiratory chain NADH dehydrogenase (Complex I) that is believed to belong to the minimal assembly required for catalysis. Complex I functions in the transfer of electrons from NADH to the respiratory chain. The immediate electron acceptor for the enzyme is believed to be ubiquinone. In Apis mellifera ligustica (Common honeybee), this protein is NADH-ubiquinone oxidoreductase chain 1 (ND1).